A 265-amino-acid chain; its full sequence is Orphan methyltransferase M.BamHII (265 aa).

It belongs to the N(4)/N(6)-methyltransferase family. N(4) subfamily.

It carries out the reaction a 2'-deoxycytidine in DNA + S-adenosyl-L-methionine = an N(4)-methyl-2'-deoxycytidine in DNA + S-adenosyl-L-homocysteine + H(+). A beta subtype methylase, recognizes the double-stranded sequence 5'-GGATCC-3', methylates C-? on both strands. No endonuclease has been identified for this methylase, although it is speculated it might protect against BamHI. This chain is Orphan methyltransferase M.BamHII (bamHIIM), found in Bacillus amyloliquefaciens (Bacillus velezensis).